Reading from the N-terminus, the 137-residue chain is Cellular retinoic acid-binding protein 1 (137 aa).

Residues 21–31 (KALGVNAMLRK) carry the Nuclear localization signal motif. All-trans-retinoate is bound at residue 132–134 (RIY).

Belongs to the calycin superfamily. Fatty-acid binding protein (FABP) family.

It localises to the cytoplasm. In terms of biological role, cytosolic CRABPs may regulate the access of retinoic acid to the nuclear retinoic acid receptors. The chain is Cellular retinoic acid-binding protein 1 (Crabp1) from Mus musculus (Mouse).